The sequence spans 142 residues: MRHYEIVIMVHPDQSEQVPAMVERYTSSVNAGGGKVHRLEDWGRRHMAYPINKIHKAHYVLMNIECSQEVIDELMHNFRFNDAILRDLVIRRKDAVTEVSPIKAAESREQRAPRGEDRPARVVADDVDDSDDDTDDEDSNDE.

The tract at residues 103–142 (KAAESREQRAPRGEDRPARVVADDVDDSDDDTDDEDSNDE) is disordered. Residues 105 to 124 (AESREQRAPRGEDRPARVVA) show a composition bias toward basic and acidic residues. Residues 125-142 (DDVDDSDDDTDDEDSNDE) are compositionally biased toward acidic residues.

This sequence belongs to the bacterial ribosomal protein bS6 family.

In terms of biological role, binds together with bS18 to 16S ribosomal RNA. The polypeptide is Small ribosomal subunit protein bS6 (Hahella chejuensis (strain KCTC 2396)).